Here is a 226-residue protein sequence, read N- to C-terminus: Glutathione S-transferase kappa 1 (226 aa).

Residues 15-17, Asn53, and 199-200 contribute to the glutathione site; these read SPY and SD.

This sequence belongs to the GST superfamily. Kappa family.

It catalyses the reaction RX + glutathione = an S-substituted glutathione + a halide anion + H(+). This is Glutathione S-transferase kappa 1 (gstk-1) from Caenorhabditis elegans.